We begin with the raw amino-acid sequence, 304 residues long: D-tagatose-1-phosphate kinase (304 aa).

Asp-250 serves as the catalytic Proton acceptor.

The protein belongs to the carbohydrate kinase PfkB family. The cofactor is Mg(2+).

The enzyme catalyses alpha-D-tagatopyranose 1-phosphate + ATP = D-tagatofuranose 1,6-bisphosphate + ADP + H(+). It functions in the pathway carbohydrate degradation. Kinase involved in a D-tagatose catabolic pathway. Catalyzes the phosphorylation of D-tagatose-1-phosphate (Tag-1P) to D-tagatose-1,6-bisphosphate. The polypeptide is D-tagatose-1-phosphate kinase (Klebsiella oxytoca).